A 602-amino-acid polypeptide reads, in one-letter code: Elongation factor 4 (602 aa).

Residues 7 to 188 (ENIRNFSIIA…AIVELIPPPK (182 aa)) form the tr-type G domain. GTP contacts are provided by residues 19 to 24 (DHGKST) and 135 to 138 (NKID).

Belongs to the TRAFAC class translation factor GTPase superfamily. Classic translation factor GTPase family. LepA subfamily.

It localises to the cell inner membrane. The enzyme catalyses GTP + H2O = GDP + phosphate + H(+). In terms of biological role, required for accurate and efficient protein synthesis under certain stress conditions. May act as a fidelity factor of the translation reaction, by catalyzing a one-codon backward translocation of tRNAs on improperly translocated ribosomes. Back-translocation proceeds from a post-translocation (POST) complex to a pre-translocation (PRE) complex, thus giving elongation factor G a second chance to translocate the tRNAs correctly. Binds to ribosomes in a GTP-dependent manner. The sequence is that of Elongation factor 4 from Chlamydia abortus (strain DSM 27085 / S26/3) (Chlamydophila abortus).